A 149-amino-acid chain; its full sequence is Transcriptional repressor NrdR (149 aa).

A zinc finger lies at 3 to 34 (CPFCAAVDTKVIDSRLVSDGSQVRRRRQCLDC). An ATP-cone domain is found at 49–139 (PRVIKSDDVR…VYRSFEDIRE (91 aa)).

It belongs to the NrdR family. Zn(2+) serves as cofactor.

Negatively regulates transcription of bacterial ribonucleotide reductase nrd genes and operons by binding to NrdR-boxes. The chain is Transcriptional repressor NrdR from Yersinia enterocolitica serotype O:8 / biotype 1B (strain NCTC 13174 / 8081).